The chain runs to 725 residues: Non-structural protein 4 (725 aa).

Disordered regions lie at residues 1-26 and 666-725; these read MSKG…GNRN and DEVE…TKDE. The span at 7–16 shows a compositional bias: polar residues; sequence TVTSLVSGPP. Over residues 675–686 the composition is skewed to basic and acidic residues; it reads ENQKQELDAKSD. Over residues 687-709 the composition is skewed to acidic residues; sequence DVEESSVEGEEDDDGSSASEETD.

In Rice gall dwarf virus (RGDV), this protein is Non-structural protein 4.